The chain runs to 839 residues: MGTRATTICSLFFLLWVLAEPAENSDFYLPGDYLLGGLFSLHANMKGIVHLNFLQVPMCKEYEVKVIGYNLMQAMRFAVEEINNDSSLLPGVLLGYEIVDVCYISNNVQPVLYFLAHEDNLLPIQEDYSNYISRVVAVIGPDNSESVMTVANFLSLFLLPQITYSAISDELQDKVRFPALLRTTPSADHHVEAMVQLMLHFRWNWIIVLVSSDTYGRDNGQLLGERLARRDICIAFQETLPTLQPNQNMTSEERQRLVTIVDKLQQSTARVVVVFSPDLSLYDFFNEVLRQNFTGAVWIASESWAIDPVLHNLTELRHLGTFLGITIQSVPIPGFSEFREWSPQAGPPPLSRTSQSYTCNQECDNCLNATLSFNTILRLSGERVVYSVYSAVYAVAHALHSLLGCDNSTCTKRVVYPWQLLEEIWKVNFTLLDHQIFFDPQGDVALHLEIVQWQWDRSQNPFQSVASYYPLQRQLKHIQDISWHTINNTIPVSMCSKRCQSGQKKKPVGIHVCCFECIDCLPGTFLNHTEDEYECQACPNNEWSYQSETSCFKRQLVFLEWHEAPTIAVALLAALGFLSTLAILVIFWRHFQTPIVRSAGGPMCFLMLTLLLVAYMVVPVYVGPPKVSTCLCRQALFPLCFTICISCIAVRSFQIVCAFKMASRFPRAYSYWVRYQGPYVSMAFITVLKMVIVVIGMLATGLSPTTRTDPDDPKITIVSCNPNYRNSLLFNTSLDLLLSVVGFSFAYMGKELPTNYNEAKFITLSMTFYFTSSVSLCTFMSAYSGVLVTIVDLLVTVLNLLAISLGYFGPKCYMILFYPERNTPAYFNSMIQGYTMRRD.

An N-terminal signal peptide occupies residues 1-19; that stretch reads MGTRATTICSLFFLLWVLA. At 20–566 the chain is on the extracellular side; the sequence is EPAENSDFYL…VFLEWHEAPT (547 aa). 9 N-linked (GlcNAc...) asparagine glycosylation sites follow: Asn-84, Asn-248, Asn-292, Asn-312, Asn-368, Asn-407, Asn-428, Asn-487, and Asn-527. Residues 567 to 587 traverse the membrane as a helical segment; sequence IAVALLAALGFLSTLAILVIF. Over 588 to 602 the chain is Cytoplasmic; it reads WRHFQTPIVRSAGGP. The helical transmembrane segment at 603–623 threads the bilayer; that stretch reads MCFLMLTLLLVAYMVVPVYVG. Over 624-635 the chain is Extracellular; the sequence is PPKVSTCLCRQA. A helical membrane pass occupies residues 636–656; sequence LFPLCFTICISCIAVRSFQIV. Residues 657-681 lie on the Cytoplasmic side of the membrane; that stretch reads CAFKMASRFPRAYSYWVRYQGPYVS. A helical membrane pass occupies residues 682 to 702; it reads MAFITVLKMVIVVIGMLATGL. Residues 703–727 lie on the Extracellular side of the membrane; that stretch reads SPTTRTDPDDPKITIVSCNPNYRNS. Residues 728-748 form a helical membrane-spanning segment; the sequence is LLFNTSLDLLLSVVGFSFAYM. The Cytoplasmic segment spans residues 749 to 760; sequence GKELPTNYNEAK. A helical transmembrane segment spans residues 761 to 781; that stretch reads FITLSMTFYFTSSVSLCTFMS. Residues 782–784 lie on the Extracellular side of the membrane; that stretch reads AYS. Residues 785 to 805 form a helical membrane-spanning segment; the sequence is GVLVTIVDLLVTVLNLLAISL. Over 806–839 the chain is Cytoplasmic; that stretch reads GYFGPKCYMILFYPERNTPAYFNSMIQGYTMRRD.

It belongs to the G-protein coupled receptor 3 family. TAS1R subfamily. As to quaternary structure, forms heterodimers with TAS1R3.

Its subcellular location is the cell membrane. In terms of biological role, putative taste receptor. TAS1R2/TAS1R3 recognizes diverse natural and synthetic sweeteners. The protein is Taste receptor type 1 member 2 (TAS1R2) of Gorilla gorilla gorilla (Western lowland gorilla).